The sequence spans 416 residues: LL-diaminopimelate aminotransferase (416 aa).

Positions 25 and 52 each coordinate substrate. Pyridoxal 5'-phosphate is bound by residues tyrosine 78, 115–116 (SK), tyrosine 140, asparagine 190, tyrosine 221, and 248–250 (SFS). Substrate is bound by residues lysine 116, tyrosine 140, and asparagine 190. Residue lysine 251 is modified to N6-(pyridoxal phosphate)lysine. Arginine 259 lines the pyridoxal 5'-phosphate pocket.

This sequence belongs to the class-I pyridoxal-phosphate-dependent aminotransferase family. In terms of assembly, homodimer. Pyridoxal 5'-phosphate is required as a cofactor.

Its subcellular location is the cytoplasm. It carries out the reaction (2S,6S)-2,6-diaminopimelate + 2-oxoglutarate = (S)-2,3,4,5-tetrahydrodipicolinate + L-glutamate + H2O + H(+). Its pathway is amino-acid biosynthesis; L-lysine biosynthesis via DAP pathway; LL-2,6-diaminopimelate from (S)-tetrahydrodipicolinate (aminotransferase route): step 1/1. In terms of biological role, involved in the synthesis of meso-diaminopimelate (m-DAP or DL-DAP), required for both lysine and peptidoglycan biosynthesis. Catalyzes the direct conversion of tetrahydrodipicolinate to LL-diaminopimelate. This is LL-diaminopimelate aminotransferase (dapL) from Methanococcus maripaludis (strain DSM 14266 / JCM 13030 / NBRC 101832 / S2 / LL).